The primary structure comprises 243 residues: Large ribosomal subunit protein uL3 (243 aa).

2 disordered regions span residues 139 to 164 (VSHR…KMPG) and 218 to 243 (KPGK…GEGA). Glutamine 151 carries the N5-methylglutamine modification. The span at 218-229 (KPGKFKLADGGD) shows a compositional bias: basic and acidic residues. Residues 230 to 243 (KAAAAPEATAGEGA) are compositionally biased toward low complexity.

It belongs to the universal ribosomal protein uL3 family. Part of the 50S ribosomal subunit. Forms a cluster with proteins L14 and L19. In terms of processing, methylated by PrmB.

One of the primary rRNA binding proteins, it binds directly near the 3'-end of the 23S rRNA, where it nucleates assembly of the 50S subunit. The protein is Large ribosomal subunit protein uL3 of Afipia carboxidovorans (strain ATCC 49405 / DSM 1227 / KCTC 32145 / OM5) (Oligotropha carboxidovorans).